The chain runs to 336 residues: Protein phosphatase 1 regulatory subunit pprA (336 aa).

Residues 1–10 (MSEQNTIINS) are compositionally biased toward low complexity. Residues 1-24 (MSEQNTIINSEEIKENEKIESETE) are disordered. The segment covering 11–21 (EEIKENEKIES) has biased composition (basic and acidic residues). LRR repeat units lie at residues 26-47 (PITY…YNIP), 49-70 (TLLD…NHLK), 71-92 (NLKK…DQLK), 93-114 (ELES…KDFQ), 115-136 (SLTY…SIKD), 139-160 (KIKE…QELV), 161-182 (PIKN…ENLV), 183-204 (NIET…NHLS), 205-225 (HLRI…KGLV), 229-250 (CLEE…QSLK), 251-272 (QLRT…NELP), and 273-294 (DLDE…EQQV). One can recognise an LRRCT domain in the interval 306–336 (NPVATHVQYRRMFINMFPQLKQLDATMVKRN).

It belongs to the SDS22 family.

It localises to the nucleus. In terms of biological role, regulatory subunit of protein phosphatase 1. This is Protein phosphatase 1 regulatory subunit pprA (pprA) from Dictyostelium discoideum (Social amoeba).